We begin with the raw amino-acid sequence, 130 residues long: Small ribosomal subunit protein uS9 (130 aa).

A disordered region spans residues 109–130 (RMKERKKYGLKGARRAPQFSKR). The segment covering 111–130 (KERKKYGLKGARRAPQFSKR) has biased composition (basic residues).

It belongs to the universal ribosomal protein uS9 family.

This is Small ribosomal subunit protein uS9 from Alkaliphilus metalliredigens (strain QYMF).